A 110-amino-acid polypeptide reads, in one-letter code: T cell receptor alpha variable 22 (110 aa).

The N-terminal stretch at 1–21 (MKRILGALLGLLSAQVCCVRG) is a signal peptide. Positions 22-110 (IQVEQSPPDL…DSGVYFCAVE (89 aa)) constitute an Ig-like domain. 2 N-linked (GlcNAc...) asparagine glycosylation sites follow: asparagine 38 and asparagine 44. Cysteine 43 and cysteine 107 form a disulfide bridge.

As to quaternary structure, alpha-beta TR is a heterodimer composed of an alpha and beta chain; disulfide-linked. The alpha-beta TR is associated with the transmembrane signaling CD3 coreceptor proteins to form the TR-CD3 (TcR or TCR). The assembly of alpha-beta TR heterodimers with CD3 occurs in the endoplasmic reticulum where a single alpha-beta TR heterodimer associates with one CD3D-CD3E heterodimer, one CD3G-CD3E heterodimer and one CD247 homodimer forming a stable octameric structure. CD3D-CD3E and CD3G-CD3E heterodimers preferentially associate with TR alpha and TR beta chains, respectively. The association of the CD247 homodimer is the last step of TcR assembly in the endoplasmic reticulum and is required for transport to the cell surface.

The protein resides in the cell membrane. V region of the variable domain of T cell receptor (TR) alpha chain that participates in the antigen recognition. Alpha-beta T cell receptors are antigen specific receptors which are essential to the immune response and are present on the cell surface of T lymphocytes. Recognize peptide-major histocompatibility (MH) (pMH) complexes that are displayed by antigen presenting cells (APC), a prerequisite for efficient T cell adaptive immunity against pathogens. Binding of alpha-beta TR to pMH complex initiates TR-CD3 clustering on the cell surface and intracellular activation of LCK that phosphorylates the ITAM motifs of CD3G, CD3D, CD3E and CD247 enabling the recruitment of ZAP70. In turn ZAP70 phosphorylates LAT, which recruits numerous signaling molecules to form the LAT signalosome. The LAT signalosome propagates signal branching to three major signaling pathways, the calcium, the mitogen-activated protein kinase (MAPK) kinase and the nuclear factor NF-kappa-B (NF-kB) pathways, leading to the mobilization of transcription factors that are critical for gene expression and essential for T cell growth and differentiation. The T cell repertoire is generated in the thymus, by V-(D)-J rearrangement. This repertoire is then shaped by intrathymic selection events to generate a peripheral T cell pool of self-MH restricted, non-autoaggressive T cells. Post-thymic interaction of alpha-beta TR with the pMH complexes shapes TR structural and functional avidity. The polypeptide is T cell receptor alpha variable 22 (Homo sapiens (Human)).